The sequence spans 211 residues: Large ribosomal subunit protein uL4 (211 aa).

Positions 40–80 (QQAHSRQGTASTLTRSEVRGGGRKPYKQKGTGRARQGSIRT) are disordered. Residues 41-54 (QAHSRQGTASTLTR) show a composition bias toward polar residues. Residues 60-71 (GGRKPYKQKGTG) show a composition bias toward basic residues.

Belongs to the universal ribosomal protein uL4 family. As to quaternary structure, part of the 50S ribosomal subunit.

Its function is as follows. One of the primary rRNA binding proteins, this protein initially binds near the 5'-end of the 23S rRNA. It is important during the early stages of 50S assembly. It makes multiple contacts with different domains of the 23S rRNA in the assembled 50S subunit and ribosome. In terms of biological role, forms part of the polypeptide exit tunnel. In Prochlorococcus marinus (strain MIT 9211), this protein is Large ribosomal subunit protein uL4.